We begin with the raw amino-acid sequence, 1008 residues long: MEGDDLFDEFGNLIGVDPFDSDEEESVLDEQEQYQTNTFEGSGNNNEIESRQLTSLGSKKELGISLEHPYGKEVEVLMETKNTQSPQTPLVEPVTERTKLQEHTIFTQLKKNIPKTRYNRDYMLSMANIPERIINVGVIGPLHSGKTSLMDLLVIDSHKRIPDMSKNVELGWKPLRYLDNLKQEIDRGLSIKLNGSTLLCTDLESKSRMINFLDAPGHVNFMDETAVALAASDLVLIVIDVVEGVTFVVEQLIKQSIKNNVAMCFVINKLDRLILDLKLPPMDAYLKLNHIIANINSFTKGNVFSPIDNNIIFASTKLGFTFTIKEFVSYYYAHSIPSSKIDDFTTRLWGSVYYHKGNFRTKPFENVEKYPTFVEFILIPLYKIFSYALSMEKDKLKNLLRSNFRVNLSQEALQYDPQPFLKHVLQLIFRQQTGLVDAITRCYQPFELFDNKTAHLSIPGKSTPEGTLWAHVLKTVDYGGAEWSLVRIYSGLLKRGDTVRILDTSQSESRQKRQLHDISKTETSNEDEDEDDETPSCEVEEIGLLGGRYVYPVHEAHKGQIVLIKGISSAYIKSATLYSVKSKEDMKQLKFFKPLDYITEAVFKIVLQPLLPRELPKLLDALNKISKYYPGVIIKVEESGEHVILGNGELYMDCLLYDLRASYAKIEIKISDPLTVFSESCSNESFASIPVSNSISRLGEENLPGLSISVAAEPMDSKMIQDLSRNTLGKGQNCLDIDGIMDNPRKLSKILRTEYGWDSLASRNVWSFYNGNVLINDTLPDEISPELLSKYKEQIIQGFYWAVKEGPLAEEPIYGVQYKLLSISVPSDVNIDVMKSQIIPLMKKACYVGLLTAIPILLEPIYEVDITVHAPLLPIVEELMKKRRGSRIYKTIKVAGTPLLEVRGQVPVIESAGFETDLRLSTNGLGMCQLYFWHKIWRKVPGDVLDKDAFIPKLKPAPINSLSRDFVMKTRRRKGISTGGFMSNDGPTLEKYISAELYAQLRENGLVP.

Serine 85 is subject to Phosphoserine. A Phosphothreonine modification is found at threonine 88. In terms of domain architecture, tr-type G spans glutamate 131 to serine 338. Residues glycine 140–threonine 147 form a G1 region. Residue glycine 140 to threonine 147 participates in GTP binding. Positions glycine 188–lysine 192 are G2. Positions aspartate 214–glycine 217 are G3. GTP-binding positions include aspartate 214–histidine 218 and asparagine 268–aspartate 271. The tract at residues asparagine 268 to aspartate 271 is G4. Residues serine 315 to lysine 317 are G5. Residues threonine 504 to serine 536 form a disordered region. Positions serine 509–lysine 520 are enriched in basic and acidic residues. The span at serine 524–serine 536 shows a compositional bias: acidic residues.

It belongs to the TRAFAC class translation factor GTPase superfamily. Classic translation factor GTPase family. EF-G/EF-2 subfamily. As to quaternary structure, belongs to the CWC complex (or CEF1-associated complex), a spliceosome sub-complex reminiscent of a late-stage spliceosome composed of the U2, U5 and U6 snRNAs and at least BUD13, BUD31, BRR2, CDC40, CEF1, CLF1, CUS1, CWC2, CWC15, CWC21, CWC22, CWC23, CWC24, CWC25, CWC27, ECM2, HSH155, IST3, ISY1, LEA1, MSL1, NTC20, PRP8, PRP9, PRP11, PRP19, PRP21, PRP22, PRP45, PRP46, SLU7, SMB1, SMD1, SMD2, SMD3, SMX2, SMX3, SNT309, SNU114, SPP2, SYF1, SYF2, RSE1 and YJU2. Component of the U4/U6-U5 tri-snRNP complex composed of the U4, U6 and U5 snRNAs and at least PRP3, PRP4, PRP6, PRP8, PRP18, PRP31, PRP38, SNU13, SNU23, SNU66, SNU114, SPP381, SMB1, SMD1, SMD2, SMD3, SMX2, SMX3, LSM2, LSM3, LSM4, LSM5, LSM6, LSM7, LSM8, BRR2 and DIB1. Interacts (via C-terminus) with CWC21. Interacts (via N-terminus) with PRP8 (via SCwid domain).

It localises to the nucleus. Component of the U5 snRNP complex required for pre-mRNA splicing. Binds GTP. In Saccharomyces cerevisiae (strain ATCC 204508 / S288c) (Baker's yeast), this protein is Pre-mRNA-splicing factor SNU114 (SNU114).